Reading from the N-terminus, the 216-residue chain is Glycerol-3-phosphate acyltransferase (216 aa).

The next 5 helical transmembrane spans lie at 4–24 (IALG…AILV), 56–76 (VAVL…AYLL), 80–100 (PLYL…PVFF), 112–132 (FGAI…TWLL), and 138–158 (GYSS…VWWF).

Belongs to the PlsY family. In terms of assembly, probably interacts with PlsX.

The protein localises to the cell inner membrane. It catalyses the reaction an acyl phosphate + sn-glycerol 3-phosphate = a 1-acyl-sn-glycero-3-phosphate + phosphate. The protein operates within lipid metabolism; phospholipid metabolism. Functionally, catalyzes the transfer of an acyl group from acyl-phosphate (acyl-PO(4)) to glycerol-3-phosphate (G3P) to form lysophosphatidic acid (LPA). This enzyme utilizes acyl-phosphate as fatty acyl donor, but not acyl-CoA or acyl-ACP. This chain is Glycerol-3-phosphate acyltransferase, found in Yersinia pseudotuberculosis serotype O:1b (strain IP 31758).